We begin with the raw amino-acid sequence, 276 residues long: MDWILICKALILGVVEGLTEFLPVSSTGHLIVAGSFLNFNDSHAKTFDVVIQFGAILAVCWEYRQRIVSVVSGLPSRPDAQRFTLNVVIATIPAIALGLLFEKKIKAVLFSPVPVAFALVVGGAIILWAEARQRERSEPPRVMSVDALTPLDALKVGIAQCFALVPGMSRSGSTIIGGMLFGLDRRVATEFSFFLAIPIIFGATLYETVKDWQAFTVDSLGLFALGLVAAFVSAFVCVRWLLRYVATHDFTVFAWYRIAFGLFVLLVGYSGWLNWA.

5 consecutive transmembrane segments (helical) span residues 83 to 103 (FTLNVVIATIPAIALGLLFEK), 108 to 128 (VLFSPVPVAFALVVGGAIILW), 187 to 207 (VATEFSFFLAIPIIFGATLYE), 217 to 237 (VDSLGLFALGLVAAFVSAFVC), and 252 to 272 (VFAWYRIAFGLFVLLVGYSGW).

This sequence belongs to the UppP family.

The protein resides in the cell inner membrane. It catalyses the reaction di-trans,octa-cis-undecaprenyl diphosphate + H2O = di-trans,octa-cis-undecaprenyl phosphate + phosphate + H(+). In terms of biological role, catalyzes the dephosphorylation of undecaprenyl diphosphate (UPP). Confers resistance to bacitracin. The sequence is that of Undecaprenyl-diphosphatase 1 from Burkholderia cenocepacia (strain HI2424).